The sequence spans 295 residues: UTP--glucose-1-phosphate uridylyltransferase (295 aa).

This sequence belongs to the UDPGP type 2 family.

It catalyses the reaction alpha-D-glucose 1-phosphate + UTP + H(+) = UDP-alpha-D-glucose + diphosphate. In terms of biological role, may play a role in stationary phase survival. This chain is UTP--glucose-1-phosphate uridylyltransferase (galU), found in Haemophilus influenzae (strain ATCC 51907 / DSM 11121 / KW20 / Rd).